The chain runs to 385 residues: Prostacyclin receptor (385 aa).

At 1 to 16 (MADSCRNLTYVRDSVG) the chain is on the extracellular side. Intrachain disulfides connect cysteine 5/cysteine 165 and cysteine 92/cysteine 170. An N-linked (GlcNAc...) asparagine glycan is attached at asparagine 7. A helical membrane pass occupies residues 17–38 (PATSTLMFVAGVVGNGLALGIL). Over 39 to 51 (GARRHSRPSAFAV) the chain is Cytoplasmic. Residues 52–76 (LVTGLGVTDLLGTCFLSPAVFAAYA) traverse the membrane as a helical segment. Topologically, residues 77-94 (RNSSLLGLARGRPALCDA) are extracellular. A helical membrane pass occupies residues 95 to 115 (FAFAMTFFGLASTLILFAMAV). Topologically, residues 116–134 (ERCLALSHPYLYAQLDGPR) are cytoplasmic. Residues 135 to 158 (RARLALPAIYAFCTIFCSLPFLGL) traverse the membrane as a helical segment. Residues 159–181 (GQHQQYCPGSWCFIRMRSAEPGG) are Extracellular-facing. A helical transmembrane segment spans residues 182–208 (CAFLLAYASLVALLVAAIVLCNGSVTL). Over 209–234 (SLCRMYRQQRRHQARCPRPRAGEDEV) the chain is Cytoplasmic. Residues 235 to 259 (DHLILLALMTGIMAVCSLPLTPQIR) traverse the membrane as a helical segment. Residues 260 to 273 (GFTQAIAPDSSEMG) lie on the Extracellular side of the membrane. Residues 274–294 (DLLAFRFNAFNPILDPWVFIL) traverse the membrane as a helical segment. Over 295–385 (FRKSVFQRLK…AGSEAACSLC (91 aa)) the chain is Cytoplasmic. The interval 315 to 344 (AQGDSRTSLSQSASGRKDSSAPPALEGKKG) is disordered. Positions 318 to 328 (DSRTSLSQSAS) are enriched in polar residues. Cysteine methyl ester is present on cysteine 382. The S-farnesyl cysteine moiety is linked to residue cysteine 382. The propeptide at 383 to 385 (SLC) is removed in mature form.

This sequence belongs to the G-protein coupled receptor 1 family. In terms of assembly, interacts (non-isoprenylated C-terminus) with PDZK1. Isoprenylation does not influence ligand binding but is required for efficient coupling to the effectors adenylyl cyclase and phospholipase C.

The protein resides in the cell membrane. Its function is as follows. Receptor for prostacyclin (prostaglandin I2 or PGI2). The activity of this receptor is mediated by G(s) proteins which activate adenylate cyclase. This Bos taurus (Bovine) protein is Prostacyclin receptor (PTGIR).